Here is a 329-residue protein sequence, read N- to C-terminus: Cathepsin K (329 aa).

The first 15 residues, 1 to 15, serve as a signal peptide directing secretion; the sequence is MWVFKFLLLPMVSFA. Residues 16-114 constitute a propeptide, activation peptide; the sequence is LSPEEMLDTQ…TLYTPEWEGR (99 aa). Residue Asn-103 is glycosylated (N-linked (GlcNAc...) asparagine). 2 disulfides stabilise this stretch: Cys-136–Cys-177 and Cys-170–Cys-210. Cys-139 is a catalytic residue. Asn-213 carries an N-linked (GlcNAc...) asparagine glycan. Residues Cys-269 and Cys-318 are joined by a disulfide bond. Residues His-276 and Asn-296 contribute to the active site.

It belongs to the peptidase C1 family. Predominantly expressed in bones. Expressed in thyroid epithelial cells.

The protein resides in the lysosome. It is found in the secreted. The protein localises to the apical cell membrane. The catalysed reaction is Broad proteolytic activity. With small-molecule substrates and inhibitors, the major determinant of specificity is P2, which is preferably Leu, Met &gt; Phe, and not Arg.. Thiol protease involved in osteoclastic bone resorption. Displays potent endoprotease activity against fibrinogen at acid pH. May play an important role in extracellular matrix degradation. Involved in the release of thyroid hormone thyroxine (T4) by limited proteolysis of TG/thyroglobulin in the thyroid follicle lumen. This is Cathepsin K (Ctsk) from Mus musculus (Mouse).